The chain runs to 243 residues: MAGHSKWANIQHRKGRQDAKRGKLWTKIIREITVAARAGGADPDSNPRLRLAWDKATDANMPKDNVQRAIQRGAGGADGDNYEEVRYEGYGIGGAAVIVDCMTDNRTRTVAEVRHAFAKNGGNLGQEGSVAFMFKHCGQFLFAPGSSEDKVMEVALDAGAEDVITDDEGGIEVICAPADYPALRQAFEAAGLKAEVDAVIMKAQSETELTGDDAIKMQKLLDALEGLDDVQEVYTNVVFDEAQ.

The disordered stretch occupies residues Met1–Arg21.

It belongs to the TACO1 family.

The protein localises to the cytoplasm. The protein is Probable transcriptional regulatory protein BAV2207 of Bordetella avium (strain 197N).